A 180-amino-acid chain; its full sequence is NAD(P)H-quinone oxidoreductase subunit I, chloroplastic (180 aa).

4Fe-4S ferredoxin-type domains are found at residues 55-84 and 95-124; these read GRIH…VDWK and LNYS…MTEE. Residues Cys64, Cys67, Cys70, Cys74, Cys104, Cys107, Cys110, and Cys114 each contribute to the [4Fe-4S] cluster site.

This sequence belongs to the complex I 23 kDa subunit family. In terms of assembly, NDH is composed of at least 16 different subunits, 5 of which are encoded in the nucleus. It depends on [4Fe-4S] cluster as a cofactor.

It localises to the plastid. The protein resides in the chloroplast thylakoid membrane. It carries out the reaction a plastoquinone + NADH + (n+1) H(+)(in) = a plastoquinol + NAD(+) + n H(+)(out). It catalyses the reaction a plastoquinone + NADPH + (n+1) H(+)(in) = a plastoquinol + NADP(+) + n H(+)(out). In terms of biological role, NDH shuttles electrons from NAD(P)H:plastoquinone, via FMN and iron-sulfur (Fe-S) centers, to quinones in the photosynthetic chain and possibly in a chloroplast respiratory chain. The immediate electron acceptor for the enzyme in this species is believed to be plastoquinone. Couples the redox reaction to proton translocation, and thus conserves the redox energy in a proton gradient. This chain is NAD(P)H-quinone oxidoreductase subunit I, chloroplastic, found in Sorghum bicolor (Sorghum).